The primary structure comprises 391 residues: S-adenosylmethionine synthase (391 aa).

His-14 provides a ligand contact to ATP. Asp-16 contacts Mg(2+). Glu-42 is a binding site for K(+). The L-methionine site is built by Glu-55 and Gln-98. Residues 98 to 108 (QSVDIAMGVDE) are flexible loop. ATP contacts are provided by residues 172–174 (DGK), 238–239 (RF), Asp-247, 253–254 (RK), Ala-270, and Lys-274. Residue Asp-247 participates in L-methionine binding. An L-methionine-binding site is contributed by Lys-278.

The protein belongs to the AdoMet synthase family. In terms of assembly, homotetramer; dimer of dimers. Mg(2+) is required as a cofactor. The cofactor is K(+).

The protein localises to the cytoplasm. The catalysed reaction is L-methionine + ATP + H2O = S-adenosyl-L-methionine + phosphate + diphosphate. Its pathway is amino-acid biosynthesis; S-adenosyl-L-methionine biosynthesis; S-adenosyl-L-methionine from L-methionine: step 1/1. In terms of biological role, catalyzes the formation of S-adenosylmethionine (AdoMet) from methionine and ATP. The overall synthetic reaction is composed of two sequential steps, AdoMet formation and the subsequent tripolyphosphate hydrolysis which occurs prior to release of AdoMet from the enzyme. This is S-adenosylmethionine synthase from Clostridium botulinum (strain Hall / ATCC 3502 / NCTC 13319 / Type A).